The chain runs to 125 residues: Small ribosomal subunit protein uS13 (125 aa).

The tract at residues 95 to 125 is disordered; that stretch reads GLPVRGQRTKNNCRTRKGKRKTVANKKKATK.

It belongs to the universal ribosomal protein uS13 family. As to quaternary structure, part of the 30S ribosomal subunit. Forms a loose heterodimer with protein S19. Forms two bridges to the 50S subunit in the 70S ribosome.

In terms of biological role, located at the top of the head of the 30S subunit, it contacts several helices of the 16S rRNA. In the 70S ribosome it contacts the 23S rRNA (bridge B1a) and protein L5 of the 50S subunit (bridge B1b), connecting the 2 subunits; these bridges are implicated in subunit movement. Contacts the tRNAs in the A and P-sites. The chain is Small ribosomal subunit protein uS13 from Cytophaga hutchinsonii (strain ATCC 33406 / DSM 1761 / CIP 103989 / NBRC 15051 / NCIMB 9469 / D465).